The following is a 411-amino-acid chain: Dual specificity protein phosphatase Mpk3 (411 aa).

Residues 22–149 (DSKDLILLDC…FRQAFPEWCE (128 aa)) enclose the Rhodanese domain. Positions 184 to 197 (DSACSSSAESSDCE) are enriched in low complexity. The segment at 184–209 (DSACSSSAESSDCESSSHHHHHHSHH) is disordered. Positions 214–358 (APVEIIPGLL…LLSFESQLRL (145 aa)) constitute a Tyrosine-protein phosphatase domain. Cys-302 acts as the Phosphocysteine intermediate in catalysis.

This sequence belongs to the protein-tyrosine phosphatase family. Non-receptor class dual specificity subfamily. In terms of assembly, interacts (via N-terminal region) with phosphorylated rl. In terms of tissue distribution, ubiquitous expression in eye and wing imaginal disks. Enriched in ovary.

It is found in the cytoplasm. It catalyses the reaction O-phospho-L-tyrosyl-[protein] + H2O = L-tyrosyl-[protein] + phosphate. The enzyme catalyses O-phospho-L-seryl-[protein] + H2O = L-seryl-[protein] + phosphate. The catalysed reaction is O-phospho-L-threonyl-[protein] + H2O = L-threonyl-[protein] + phosphate. Its activity is regulated as follows. Activity abolished by tyrosine phosphatase inhibitor sodium vanadate. Activated by rl. In terms of biological role, negatively regulates the activity of members of the MAP kinase family in response to changes in the cellular environment. Has a specificity for the ERK family. Acts as a negative regulator in a variety of developmental processes including cell differentiation and proliferation controlled by the Ras/ERK pathway. Suppresses the photoreceptor cell differentiation and wing vein formation. Required for proper oogenesis and early embryogenesis. Functions autonomously in a subset of photoreceptor progenitor cells in eye imaginal disks. Also appears to be required in surrounding non-neuronal cells for ommatidial patterning and photoreceptor differentiation. Plays a role in the maintenance of epithelial integrity during tracheal development. In Drosophila melanogaster (Fruit fly), this protein is Dual specificity protein phosphatase Mpk3 (Mkp3).